The primary structure comprises 237 residues: Putative N-acetylmannosamine-6-phosphate 2-epimerase (237 aa).

Belongs to the NanE family.

The catalysed reaction is an N-acyl-D-glucosamine 6-phosphate = an N-acyl-D-mannosamine 6-phosphate. It functions in the pathway amino-sugar metabolism; N-acetylneuraminate degradation; D-fructose 6-phosphate from N-acetylneuraminate: step 3/5. Converts N-acetylmannosamine-6-phosphate (ManNAc-6-P) to N-acetylglucosamine-6-phosphate (GlcNAc-6-P). The polypeptide is Putative N-acetylmannosamine-6-phosphate 2-epimerase (Listeria monocytogenes serotype 4a (strain HCC23)).